The sequence spans 134 residues: Crustacean hyperglycemic hormones isoform A (134 aa).

The signal sequence occupies residues 1 to 24 (MMACRTLCLVVVMVASLGTSGVGG). Residue Gln61 is modified to Pyrrolidone carboxylic acid. Residue Phe63 is modified to D-phenylalanine; in form CHH-A-II. Disulfide bonds link Cys67-Cys103, Cys83-Cys99, and Cys86-Cys112. Val132 is subject to Valine amide.

This sequence belongs to the arthropod CHH/MIH/GIH/VIH hormone family. Stereoinversion of L-Phe (form CHH-A-I) to D-Phe (form CHH-A-II). As to expression, produced by the medulla terminalis X-organ in the eyestalks and transported to the sinus gland where they are stored and released. Present also in the ventral nervous system.

The protein localises to the secreted. Functionally, CHH is the most abundant hormone in the sinus gland of isopods and decapods which controls the blood sugar level. Has a secretagogue action over the amylase released from the midgut gland. May act as a stress hormone. In terms of biological role, MIH may inhibit Y-organs where molting hormone (ecdysteroid) is secreted and a molting cycle is initiated when MIH secretion diminishes or stops. The protein is Crustacean hyperglycemic hormones isoform A of Homarus americanus (American lobster).